We begin with the raw amino-acid sequence, 1576 residues long: Disco-interacting protein 2 homolog B (1576 aa).

3 positions are modified to phosphoserine: S9, S50, and S53. One can recognise a DMAP1-binding domain in the interval 12-131 (AVAALPPEVR…PMPTKRRSTF (120 aa)). The segment at 31-167 (LSEGDITQKG…AALSAALQQS (137 aa)) is disordered. A compositionally biased stretch (polar residues) spans 52 to 62 (YSPQTQETDSA). Low complexity predominate over residues 70–83 (QTPAPSAAQTSAPS). The residue at position 71 (T71) is a Phosphothreonine. Over residues 92 to 104 (GARDERYRSDIHT) the composition is skewed to basic and acidic residues. S100 carries the post-translational modification Phosphoserine. T140 bears the Phosphothreonine mark. Residues S146, S148, and S153 each carry the phosphoserine modification. A compositionally biased stretch (low complexity) spans 155 to 167 (RRQAALSAALQQS). Residues S178, S193, and S203 each carry the phosphoserine modification. The disordered stretch occupies residues 179–201 (IQGSSTSSSASSTLSHGEVKGTS). Positions 182–193 (SSTSSSASSTLS) are enriched in low complexity. The disordered stretch occupies residues 217 to 246 (SAPPDVTTTTSSSSSSSSIRPANIDLPPSG). Residues 223-234 (TTTTSSSSSSSS) show a composition bias toward low complexity. Position 259 is a phosphoserine (S259).

Belongs to the DIP2 family. As to quaternary structure, interacts with alpha-tubulin. As to expression, moderately expressed in adult brain, placenta, skeletal muscle, heart, kidney, pancreas, lung, spleen and colon. Expression was weaker in adult liver, kidney, spleen, and ovary, and in fetal brain and liver. In the brain, it is expressed in the cerebral cortex; the frontal, parietal, occipital and temporal lobes; the paracentral gyrus; the pons; the corpus callosum and the hippocampus. Highest expression levels in the brain were found in the cerebral cortex and the frontal and parietal lobes.

Its subcellular location is the cell projection. It localises to the dendrite. The protein localises to the axon. It is found in the perikaryon. In terms of biological role, negatively regulates axonal outgrowth and is essential for normal synaptic transmission. Not required for regulation of axon polarity. Promotes acetylation of alpha-tubulin. The sequence is that of Disco-interacting protein 2 homolog B (DIP2B) from Homo sapiens (Human).